A 411-amino-acid chain; its full sequence is Adherens junction-associated protein 1 (411 aa).

The first 43 residues, methionine 1–alanine 43, serve as a signal peptide directing secretion. Topologically, residues leucine 44–glutamine 282 are extracellular. 3 disordered regions span residues isoleucine 89 to alanine 108, alanine 115 to phenylalanine 197, and serine 239 to proline 268. The segment covering alanine 115–proline 146 has biased composition (low complexity). Over residues serine 166–threonine 178 the composition is skewed to polar residues. Positions proline 247–glycine 263 are enriched in low complexity. A helical transmembrane segment spans residues isoleucine 283–leucine 303. The interval leucine 303–cysteine 411 is targeting signals. Topologically, residues lysine 304–cysteine 411 are cytoplasmic. The interval glycine 311 to glutamine 330 is disordered.

In terms of assembly, forms a complex with CDH1 and CTNNB1; interacts directly with CTNNB1. Interacts with AP1M2. Interacts with isoform 2 of BSG/CD147. Post-translationally, thr-237 and Ser-239 may be phosphorylated; however as this position is probably extracellular, the in vivo relevance is not proven. Expressed in uterus and pancreas (at protein level).

The protein localises to the basolateral cell membrane. It is found in the apical cell membrane. Its subcellular location is the cell junction. The protein resides in the adherens junction. In terms of biological role, plays a role in cell adhesion and cell migration. This Homo sapiens (Human) protein is Adherens junction-associated protein 1 (AJAP1).